The chain runs to 273 residues: MSFVILVVLGLIAGTVGSLIGLGGGIVIVPSLMFLSTVTQLFQDVTPQVAIGTSLLVIIFTGLSSTLAYIKYKTVDYKSGLIFFIGSGPGSMIGAYVSKLFNSNSFSVWFGIFMILISLSLMLKAKARPINKAHKGIIRTFQDDAGEPYTYSYQASVGIAIAFVVGFLGGLFGIGGGSLMVPAMMLLFLFPPKVAVATSMFIIFLSSMTGSVSHMISGHVNWLYALALVPGAWFGGKLGAAINRKMQTKTIVMIMRIVLILIGCQLIYEGIFS.

Transmembrane regions (helical) follow at residues 3–23, 50–70, 81–101, 105–125, 157–177, 185–205, 222–242, and 251–271; these read FVILVVLGLIAGTVGSLIGLG, AIGTSLLVIIFTGLSSTLAYI, LIFFIGSGPGSMIGAYVSKLF, SFSVWFGIFMILISLSLMLKA, VGIAIAFVVGFLGGLFGIGGG, MLLFLFPPKVAVATSMFIIFL, WLYALALVPGAWFGGKLGAAI, and IVMIMRIVLILIGCQLIYEGI.

The protein belongs to the 4-toluene sulfonate uptake permease (TSUP) (TC 2.A.102) family.

It is found in the cell membrane. The polypeptide is Probable membrane transporter protein YunE (yunE) (Bacillus subtilis (strain 168)).